A 546-amino-acid chain; its full sequence is Chaperonin GroEL (546 aa).

ATP is bound by residues 30–33 (TLGP), Lys51, 87–91 (DGTTT), Gly415, 479–481 (NAA), and Asp495.

The protein belongs to the chaperonin (HSP60) family. Forms a cylinder of 14 subunits composed of two heptameric rings stacked back-to-back. Interacts with the co-chaperonin GroES.

Its subcellular location is the cytoplasm. It catalyses the reaction ATP + H2O + a folded polypeptide = ADP + phosphate + an unfolded polypeptide.. Its function is as follows. Together with its co-chaperonin GroES, plays an essential role in assisting protein folding. The GroEL-GroES system forms a nano-cage that allows encapsulation of the non-native substrate proteins and provides a physical environment optimized to promote and accelerate protein folding. This chain is Chaperonin GroEL, found in Pseudomonas putida (strain ATCC 47054 / DSM 6125 / CFBP 8728 / NCIMB 11950 / KT2440).